Reading from the N-terminus, the 715-residue chain is Polyribonucleotide nucleotidyltransferase (715 aa).

The Mg(2+) site is built by Asp-493 and Asp-499. The KH domain occupies 560–619 (PRMITIKINPEKIRDVIGKGGSVIRALTEETGTTIDISDDGVVTIASTSSEGMAEAKKRI). The S1 motif domain occupies 629 to 697 (GQVYEGTVLK…EKGRVRLSAK (69 aa)).

Belongs to the polyribonucleotide nucleotidyltransferase family. Mg(2+) serves as cofactor.

The protein localises to the cytoplasm. It carries out the reaction RNA(n+1) + phosphate = RNA(n) + a ribonucleoside 5'-diphosphate. Its function is as follows. Involved in mRNA degradation. Catalyzes the phosphorolysis of single-stranded polyribonucleotides processively in the 3'- to 5'-direction. The polypeptide is Polyribonucleotide nucleotidyltransferase (Burkholderia multivorans (strain ATCC 17616 / 249)).